The chain runs to 40 residues: MANTTGRIPLWIIGTVAGIVVIGLIGLFFYGSYSGLGSSL.

The helical transmembrane segment at 8–28 (IPLWIIGTVAGIVVIGLIGLF) threads the bilayer.

This sequence belongs to the PsbJ family. PSII is composed of 1 copy each of membrane proteins PsbA, PsbB, PsbC, PsbD, PsbE, PsbF, PsbH, PsbI, PsbJ, PsbK, PsbL, PsbM, PsbT, PsbX, PsbY, PsbZ, Psb30/Ycf12, at least 3 peripheral proteins of the oxygen-evolving complex and a large number of cofactors. It forms dimeric complexes.

It localises to the plastid. Its subcellular location is the chloroplast thylakoid membrane. Its function is as follows. One of the components of the core complex of photosystem II (PSII). PSII is a light-driven water:plastoquinone oxidoreductase that uses light energy to abstract electrons from H(2)O, generating O(2) and a proton gradient subsequently used for ATP formation. It consists of a core antenna complex that captures photons, and an electron transfer chain that converts photonic excitation into a charge separation. The sequence is that of Photosystem II reaction center protein J from Pisum sativum (Garden pea).